The sequence spans 122 residues: MNDFSRSISDLTPERVTTAFDLAGHTTARSLGVAQGIVVRSRSIVGSFGAALQTIFGGNITLYTSLCEKARQQAFDKMLADARKLGANAIVAMRYDSTEIGSGITEVICYGTAVQVTRNAGA.

This sequence belongs to the UPF0145 family.

This chain is UPF0145 protein BamMC406_5002, found in Burkholderia ambifaria (strain MC40-6).